The sequence spans 465 residues: ATP-dependent RNA helicase ddx19 (465 aa).

Residues 1-20 (MSEKETNTTSTENKEKEKQE) show a composition bias toward basic and acidic residues. The disordered stretch occupies residues 1–45 (MSEKETNTTSTENKEKEKQEQTNTNSTTESTNNQVDEEYERPGRS). A compositionally biased stretch (low complexity) spans 21 to 34 (QTNTNSTTESTNNQ). The Q motif motif lies at 70–98 (KTFEELGLKPELLKGVYAMGYNKPSKIQE). The Helicase ATP-binding domain occupies 102–268 (PIIIQSPNNL…KKIVQDPYTS (167 aa)). Residue 115 to 122 (SQSGTGKT) participates in ATP binding. The DEAD box motif lies at 215–218 (DEAD). Residues 297–449 (ILSDIYGFIS…ELKSSEIESL (153 aa)) form the Helicase C-terminal domain.

It belongs to the DEAD box helicase family. DDX19/DBP5 subfamily.

It carries out the reaction ATP + H2O = ADP + phosphate + H(+). Functionally, ATP-binding RNA helicase required for normal differentiation and development. The chain is ATP-dependent RNA helicase ddx19 (helC) from Dictyostelium discoideum (Social amoeba).